Here is a 75-residue protein sequence, read N- to C-terminus: Conotoxin ar11a (75 aa).

Residues methionine 1–glycine 19 form the signal peptide. The propeptide occupies glutamate 20–arginine 36. 4 cysteine pairs are disulfide-bonded: cysteine 39/cysteine 53, cysteine 46/cysteine 58, cysteine 52/cysteine 63, and cysteine 57/cysteine 70.

Expressed by the venom duct.

Its subcellular location is the secreted. Both natural (L-Leu form) and synthetic (D-Leu from) peptides equally cause sensitivity to touch and body tremor. Neither L-Leu form nor D-Leu form is active on nerve-muscle preparation. The protein is Conotoxin ar11a of Conus arenatus (Sand-dusted cone).